A 266-amino-acid polypeptide reads, in one-letter code: Short-chain dehydrogenase/reductase AacuF (266 aa).

Residues Leu-13, Asp-57, and Asn-85 each contribute to the NADP(+) site. Residues Ser-145 and Tyr-164 each act as proton donor in the active site. NADP(+)-binding residues include Tyr-164, Lys-168, and Val-198. Lys-168 (lowers pKa of active site Tyr) is an active-site residue.

The protein belongs to the short-chain dehydrogenases/reductases (SDR) family.

The protein operates within secondary metabolite biosynthesis. Short-chain dehydrogenase/reductase; part of the gene cluster that mediates the biosynthesis of the tetrahydroxanthone dimer secalonic acid D. The pathway begins with the synthesis of atrochrysone thioester by the polyketide synthase AacuL. The atrochrysone carboxyl ACP thioesterase AacuM then breaks the thioester bond and releases the atrochrysone carboxylic acid from AacuL. Atrochrysone carboxylic acid is decarboxylated by the decarboxylase AacuI, and oxidized by the anthrone oxygenase AacuG to yield emodin. Emodin is then reduced to emodin hydroquinone by a yet unidentified oxidoreductase. A-ring reduction by the short chain dehydrogenase AacuN, dehydration by the scytalone dehydratase-like protein AacuK and probable spontaneous re-oxidation, results in overall deoxygenation to chrysophanol. Baeyer-Villiger oxidation by the Baeyer-Villiger monooxygenase (BVMO) AacuH then yields monodictyphenone. Monodictyphenone is transformed into compounds with the tetrahydroxanthone skeleton via methylesterification by the methyltransferase AacuQ, followed by the action of the flavin-dependent monooxygenase AacuC, the isomerase AacuP, and the short chain dehydrogenase/reductase AacuF or AacuD. AacuF and AacuD should accept the same compound as a substrate but perform the ketoreduction with a different stereoselectivity, thus yielding blennolides B and A, respectively. In the final step of the biosynthesis, the cytochrome P450 monooxygenase AacuE accepts blennolide B and/or blennolide A to conduct the dimerization reaction to furnish the tetrahydroxanthone dimers, secalonic acids D, B, and F. In Aspergillus aculeatus (strain ATCC 16872 / CBS 172.66 / WB 5094), this protein is Short-chain dehydrogenase/reductase AacuF.